Reading from the N-terminus, the 203-residue chain is Endo-type membrane-bound lytic murein transglycosylase A (203 aa).

The N-terminal stretch at 1–15 is a signal peptide; the sequence is MKLRWFAFLVVILAG. The N-palmitoyl cysteine moiety is linked to residue Cys-16. Cys-16 is lipidated: S-diacylglycerol cysteine.

Belongs to the transglycosylase Slt family.

It localises to the cell outer membrane. The catalysed reaction is Endolytic cleavage of the (1-&gt;4)-beta-glycosidic linkage between N-acetylmuramic acid (MurNAc) and N-acetylglucosamine (GlcNAc) residues in peptidoglycan with concomitant formation of a 1,6-anhydrobond in the MurNAc residue.. Its function is as follows. Murein-degrading enzyme. May play a role in recycling of muropeptides during cell elongation and/or cell division. Preferentially cleaves at a distance of more than two disaccharide units from the ends of the glycan chain. This chain is Endo-type membrane-bound lytic murein transglycosylase A, found in Salmonella paratyphi C (strain RKS4594).